The sequence spans 545 residues: Glucans biosynthesis protein G (545 aa).

The signal sequence occupies residues 1–34 (MVSLLRCQSFKPSSSLICSLALSAAFALSSSAFA). Residues 38 to 60 (KPAENKPATPVVSPPKATAQPAN) are disordered.

It belongs to the OpgD/OpgG family.

The protein resides in the periplasm. The protein operates within glycan metabolism; osmoregulated periplasmic glucan (OPG) biosynthesis. Its function is as follows. Involved in the biosynthesis of osmoregulated periplasmic glucans (OPGs). This chain is Glucans biosynthesis protein G, found in Shewanella sp. (strain MR-7).